A 1671-amino-acid chain; its full sequence is Hybrid signal transduction protein dokA (1671 aa).

Basic and acidic residues predominate over residues 1–10; that stretch reads MSSPHIELHS. Disordered regions lie at residues 1–27, 42–89, 126–241, 365–451, 579–603, and 629–651; these read MSSP…ELTG, DDLN…DKND, QQQQ…RRSS, YSNN…NNEE, HNHN…SPFI, and SNSS…SSNA. Over residues 11-27 the composition is skewed to polar residues; the sequence is QRTLSPQPSSNNFELTG. Low complexity-rich tracts occupy residues 45–83 and 126–167; these read NNNN…NNNN and QQQQ…QQQE. A compositionally biased stretch (acidic residues) spans 168–179; the sequence is QEQEQEQEQEQE. The span at 367-449 shows a compositional bias: low complexity; that stretch reads NNNNNTNTNN…NNNNNNNNNN (83 aa). Positions 591-600 are enriched in polar residues; it reads TTQRASSTDS. One can recognise a Histidine kinase domain in the interval 1050-1276; that stretch reads NISHELRTPC…TFWFAIKVSI (227 aa). The Response regulatory domain maps to 1519-1633; sequence YILVAEDNDI…RLQKTLSDWI (115 aa).

In terms of processing, under osmotic stress conditions, this protein undergoes phosphorylation at a serine residue in the kinase core, which is not due to an autophosphorylation of dokA. This is in contrast to the classic two-component paradigm, which predicts only histidine and aspartate phosphorylation.

Its function is as follows. Part of the osmoregulatory pathway which leads to the increase of intracellular cAMP concentration in response to hyperosmotic stress. Thought to negatively regulate the rdeA-regA pathway by acting as a phosphatase towards the HPt protein rdeA. Has probably no histidine kinase activity. The protein is Hybrid signal transduction protein dokA (dokA) of Dictyostelium discoideum (Social amoeba).